We begin with the raw amino-acid sequence, 278 residues long: Cysteine-rich repeat secretory protein 18 (278 aa).

A signal peptide spans 1 to 32 (MYSSSSVSKRFVLVPIVVVVTTQLLLVRNVSS). 2 consecutive Gnk2-homologous domains span residues 39–147 (YLHH…SLDT) and 160–267 (PSAK…LYPF).

It belongs to the cysteine-rich repeat secretory protein family.

The protein localises to the secreted. This is Cysteine-rich repeat secretory protein 18 (CRRSP18) from Arabidopsis thaliana (Mouse-ear cress).